The primary structure comprises 44 residues: Thioredoxin (44 aa).

The 43-residue stretch at 2-44 (IELDKSNFEEEVLKAEGTVLVDFWSPSCEPCKALMPHVHDFEE) folds into the Thioredoxin domain. Cys-29 and Cys-32 are disulfide-bonded.

Belongs to the thioredoxin family.

Participates in various redox reactions through the reversible oxidation of its active center dithiol to a disulfide and catalyzes dithiol-disulfide exchange reactions. The protein is Thioredoxin (trxA) of Tissierella creatinophila.